Here is a 539-residue protein sequence, read N- to C-terminus: Phosphoenolpyruvate carboxykinase (ATP) (539 aa).

3 residues coordinate substrate: Arg64, Tyr206, and Lys212. ATP contacts are provided by residues Lys212, His231, and 247–255 (GLSGTGKTT). Positions 212 and 231 each coordinate Mn(2+). Residue Asp268 coordinates Mn(2+). ATP contacts are provided by residues Glu296, Arg332, 448-449 (RI), and Thr454. Residue Arg332 participates in substrate binding.

This sequence belongs to the phosphoenolpyruvate carboxykinase (ATP) family. As to quaternary structure, monomer. Mn(2+) serves as cofactor.

The protein resides in the cytoplasm. The catalysed reaction is oxaloacetate + ATP = phosphoenolpyruvate + ADP + CO2. It participates in carbohydrate biosynthesis; gluconeogenesis. Functionally, involved in the gluconeogenesis. Catalyzes the conversion of oxaloacetate (OAA) to phosphoenolpyruvate (PEP) through direct phosphoryl transfer between the nucleoside triphosphate and OAA. In Cronobacter sakazakii (strain ATCC BAA-894) (Enterobacter sakazakii), this protein is Phosphoenolpyruvate carboxykinase (ATP).